The primary structure comprises 235 residues: Mediator of RNA polymerase II transcription subunit 6 (235 aa).

Belongs to the Mediator complex subunit 6 family. As to quaternary structure, component of the Mediator complex.

Its subcellular location is the nucleus. Component of the Mediator complex, a coactivator involved in the regulated transcription of nearly all RNA polymerase II-dependent genes. Mediator functions as a bridge to convey information from gene-specific regulatory proteins to the basal RNA polymerase II transcription machinery. Mediator is recruited to promoters by direct interactions with regulatory proteins and serves as a scaffold for the assembly of a functional preinitiation complex with RNA polymerase II and the general transcription factors. The protein is Mediator of RNA polymerase II transcription subunit 6 (MED6) of Eremothecium gossypii (strain ATCC 10895 / CBS 109.51 / FGSC 9923 / NRRL Y-1056) (Yeast).